We begin with the raw amino-acid sequence, 245 residues long: Probable phosphatase Teth514_1060 (245 aa).

Histidine 8, histidine 10, histidine 16, histidine 41, glutamate 74, histidine 102, histidine 133, aspartate 194, and histidine 196 together coordinate Zn(2+).

Belongs to the PHP family. Requires Zn(2+) as cofactor.

The protein is Probable phosphatase Teth514_1060 of Thermoanaerobacter sp. (strain X514).